The chain runs to 128 residues: MTEPEVNPKAYPLADAQLTKTLLDLVQQAANYKQLRKGANEATKTLNRGIAEFIVMAADAEPLEIILHLPLLCEDKNVPYVFVRSKQALGRACGVSRPVIACAVTIKEGSQLKPQIQSLQQSIERLLV.

The tract at residues 36-48 is interaction with U4 snRNA and U4atac snRNA; the sequence is RKGANEATKTLNR. The interval 96 to 128 is important for U4 snRNA-binding; sequence SRPVIACAVTIKEGSQLKPQIQSLQQSIERLLV.

This sequence belongs to the eukaryotic ribosomal protein eL8 family. Identified in the spliceosome B complex. Component of the U4/U6-U5 tri-snRNP complex. Part of the small subunit (SSU) processome, composed of more than 70 proteins and the RNA chaperone small nucleolar RNA (snoRNA) U3.

It is found in the nucleus. Its subcellular location is the nucleolus. Functionally, part of the small subunit (SSU) processome, first precursor of the small eukaryotic ribosomal subunit. During the assembly of the SSU processome in the nucleolus, many ribosome biogenesis factors, an RNA chaperone and ribosomal proteins associate with the nascent pre-rRNA and work in concert to generate RNA folding, modifications, rearrangements and cleavage as well as targeted degradation of pre-ribosomal RNA by the RNA exosome. Involved in pre-mRNA splicing as component of the spliceosome. Binds to the 5'-stem-loop of U4 snRNA and thereby contributes to spliceosome assembly. The protein undergoes a conformational change upon RNA-binding. Core component of box C/D small nucleolar ribonucleoprotein (snoRNP) complexes that function in methylation of multiple sites on ribosomal RNAs (rRNAs) and messenger RNAs (mRNAs). This chain is NHP2-like protein 1, found in Xenopus tropicalis (Western clawed frog).